Reading from the N-terminus, the 1006-residue chain is D-2-hydroxyglutarate dehydrogenase (1006 aa).

Residues tyrosine 47 to isoleucine 279 enclose the FAD-binding PCMH-type domain. (R)-2-hydroxyglutarate-binding residues include arginine 397 and histidine 495. A 4Fe-4S ferredoxin-type domain is found at serine 655 to arginine 687. The [4Fe-4S] cluster site is built by cysteine 665, cysteine 668, cysteine 671, and cysteine 675.

In the N-terminal section; belongs to the FAD-binding oxidoreductase/transferase type 4 family. The cofactor is [4Fe-4S] cluster. FAD is required as a cofactor.

The catalysed reaction is (R)-2-hydroxyglutarate + A = 2-oxoglutarate + AH2. The protein operates within amino-acid degradation. Catalyzes the oxidation of D-2-hydroxyglutarate (D-2-HGA) to 2-oxoglutarate. Is involved in a D-lysine catabolic pathway. The chain is D-2-hydroxyglutarate dehydrogenase from Pseudomonas putida (strain ATCC 47054 / DSM 6125 / CFBP 8728 / NCIMB 11950 / KT2440).